Here is a 493-residue protein sequence, read N- to C-terminus: ATP synthase subunit beta 3 (493 aa).

The disordered stretch occupies residues 113 to 138 (VPGDNGTPLPPGTPRRPIHRKPPPLA). ATP is bound at residue 170–177 (GGAGVGKT).

This sequence belongs to the ATPase alpha/beta chains family. In terms of assembly, F-type ATPases have 2 components, CF(1) - the catalytic core - and CF(0) - the membrane proton channel. CF(1) has five subunits: alpha(3), beta(3), gamma(1), delta(1), epsilon(1). CF(0) has three main subunits: a(1), b(2) and c(9-12). The alpha and beta chains form an alternating ring which encloses part of the gamma chain. CF(1) is attached to CF(0) by a central stalk formed by the gamma and epsilon chains, while a peripheral stalk is formed by the delta and b chains.

The protein localises to the cell inner membrane. It carries out the reaction ATP + H2O + 4 H(+)(in) = ADP + phosphate + 5 H(+)(out). Produces ATP from ADP in the presence of a proton gradient across the membrane. The catalytic sites are hosted primarily by the beta subunits. The sequence is that of ATP synthase subunit beta 3 from Paraburkholderia xenovorans (strain LB400).